The primary structure comprises 373 residues: Phosphoserine aminotransferase (373 aa).

An L-glutamate-binding site is contributed by Arg41. Residues 75 to 76 (GT), Trp101, Thr152, Asp172, and Gln195 each bind pyridoxal 5'-phosphate. At Lys196 the chain carries N6-(pyridoxal phosphate)lysine. 236-237 (NT) is a pyridoxal 5'-phosphate binding site.

The protein belongs to the class-V pyridoxal-phosphate-dependent aminotransferase family. SerC subfamily. In terms of assembly, homodimer. Pyridoxal 5'-phosphate is required as a cofactor.

The protein resides in the cytoplasm. It catalyses the reaction O-phospho-L-serine + 2-oxoglutarate = 3-phosphooxypyruvate + L-glutamate. The catalysed reaction is 4-(phosphooxy)-L-threonine + 2-oxoglutarate = (R)-3-hydroxy-2-oxo-4-phosphooxybutanoate + L-glutamate. It participates in amino-acid biosynthesis; L-serine biosynthesis; L-serine from 3-phospho-D-glycerate: step 2/3. In terms of biological role, catalyzes the reversible conversion of 3-phosphohydroxypyruvate to phosphoserine and of 3-hydroxy-2-oxo-4-phosphonooxybutanoate to phosphohydroxythreonine. This chain is Phosphoserine aminotransferase, found in Lactobacillus helveticus (strain DPC 4571).